The following is a 239-amino-acid chain: Pathogenesis-related protein 5 (239 aa).

Positions 1–23 (MANISSIHILFLVFITSGIAVMA) are cleaved as a signal peptide. 8 disulfide bridges follow: cysteine 32-cysteine 238, cysteine 79-cysteine 89, cysteine 94-cysteine 99, cysteine 146-cysteine 228, cysteine 151-cysteine 211, cysteine 159-cysteine 174, cysteine 178-cysteine 187, and cysteine 188-cysteine 198.

This sequence belongs to the thaumatin family.

It localises to the secreted. The protein resides in the extracellular space. Its subcellular location is the apoplast. Functionally, partially responsible for acquired pathogen resistance. In Arabidopsis thaliana (Mouse-ear cress), this protein is Pathogenesis-related protein 5.